A 335-amino-acid chain; its full sequence is Twinfilin (335 aa).

2 ADF-H domains span residues 4–140 and 176–316; these read SSGI…QHKL and GISF…NELH. A disordered region spans residues 307–335; that stretch reads SEESIINELHPPKVEEKKAFSKPSRPGRK. A compositionally biased stretch (basic and acidic residues) spans 316-325; that stretch reads HPPKVEEKKA.

It belongs to the actin-binding proteins ADF family. Twinfilin subfamily. As to quaternary structure, interacts with G-actin; ADP-actin form.

Its subcellular location is the cytoplasm. The protein resides in the cytoskeleton. The protein localises to the cell cortex. Actin-binding protein involved in motile and morphological processes. Inhibits actin polymerization, likely by sequestering G-actin. This is Twinfilin (twfA) from Dictyostelium discoideum (Social amoeba).